Reading from the N-terminus, the 136-residue chain is Preprocaerulein type I' (136 aa).

The first 26 residues, methionine 1–alanine 26, serve as a signal peptide directing secretion. Residues aspartate 27 to arginine 136 constitute a propeptide that is removed on maturation. The segment at glycine 82–aspartate 101 is disordered.

This sequence belongs to the gastrin/cholecystokinin family. In terms of tissue distribution, expressed by the skin glands.

The protein localises to the secreted. Functionally, the pharmacological activities of caerulein are quite similar to the physiological activities of gastrin and related peptides. The polypeptide is Preprocaerulein type I' (Xenopus laevis (African clawed frog)).